The following is a 248-amino-acid chain: tRNA (guanine-N(1)-)-methyltransferase (248 aa).

S-adenosyl-L-methionine is bound by residues G113 and 133–138 (IGDYVL). Residues 226-248 (ARPAQTIRAKGESQKTPKNKTDG) form a disordered region. The span at 234–248 (AKGESQKTPKNKTDG) shows a compositional bias: basic and acidic residues.

This sequence belongs to the RNA methyltransferase TrmD family. Homodimer.

The protein localises to the cytoplasm. It carries out the reaction guanosine(37) in tRNA + S-adenosyl-L-methionine = N(1)-methylguanosine(37) in tRNA + S-adenosyl-L-homocysteine + H(+). Functionally, specifically methylates guanosine-37 in various tRNAs. In Rhodopseudomonas palustris (strain ATCC BAA-98 / CGA009), this protein is tRNA (guanine-N(1)-)-methyltransferase.